The primary structure comprises 172 residues: Small ribosomal subunit protein uS5 (172 aa).

Positions 15-78 constitute an S5 DRBM domain; it reads LNDKLIFINR…ANAKRNLSRI (64 aa).

It belongs to the universal ribosomal protein uS5 family. Part of the 30S ribosomal subunit. Contacts proteins S4 and S8.

Functionally, with S4 and S12 plays an important role in translational accuracy. Its function is as follows. Located at the back of the 30S subunit body where it stabilizes the conformation of the head with respect to the body. The chain is Small ribosomal subunit protein uS5 from Dehalococcoides mccartyi (strain CBDB1).